The following is a 1404-amino-acid chain: Microtubule organization protein AKNA (1404 aa).

Disordered regions lie at residues 1–304 (MASS…VSPL) and 317–382 (QHKQ…RPLI). At serine 51 the chain carries Phosphoserine. Over residues 70–91 (WDPDMQDSEESSGEETEADDAS) the composition is skewed to acidic residues. The span at 185-203 (KSWSSGTVSLRQPSDSLGS) shows a compositional bias: polar residues. Serine 302 is modified (phosphoserine). 2 positions are modified to phosphoserine: serine 485 and serine 520. A disordered region spans residues 494–549 (AEWWPDPAQDPQASEATGWPFPRTDLSPSSSPGVATPGRLPQSQGIATDQPSTGQT). Polar residues predominate over residues 534-549 (PQSQGIATDQPSTGQT). Serine 617 is subject to Phosphoserine. Positions 645-659 (MDQTQRETEPCRPDL) are enriched in basic and acidic residues. The tract at residues 645-708 (MDQTQRETEP…TSPGSSCTLP (64 aa)) is disordered. Polar residues-rich tracts occupy residues 660-674 (QDST…QSAH) and 686-707 (DGQT…SCTL). Phosphoserine occurs at positions 750 and 753. A PEST region spans residues 754–787 (LPEALRDEDEDDLEEEEEEQDHQGPLEVDSPATA). 2 disordered regions span residues 755 to 1038 (PEAL…STAN) and 1085 to 1185 (HSTQ…RERV). The segment covering 759 to 773 (RDEDEDDLEEEEEEQ) has biased composition (acidic residues). Positions 803-813 (TQAEESHRDAT) are enriched in basic and acidic residues. A phosphoserine mark is found at serine 831 and serine 860. Positions 885–906 (HTEEPWMVSPETDSGFVGSETS) are PEST. Composition is skewed to polar residues over residues 903 to 914 (SETSIVSPFTQT), 921 to 933 (HVST…QHLT), and 963 to 974 (SRTQQHFSSLSS). Residue serine 971 is modified to Phosphoserine. Over residues 1015–1029 (TSPDSAPAPTAASTP) the composition is skewed to low complexity. A compositionally biased stretch (polar residues) spans 1085–1098 (HSTQTQEKLGSSPS). Positions 1088-1096 (QTQEKLGSS) form a DNA-binding region, a.T hook. Serine 1144 and serine 1145 each carry phosphoserine. Residues 1155 to 1167 (SSEKSRTFEEHPE) are compositionally biased toward basic and acidic residues. Serine 1200 carries the post-translational modification Phosphoserine. Disordered regions lie at residues 1208–1235 (SGTP…TTRG) and 1253–1286 (SAEA…QTGS). Positions 1221-1235 (TQDTGSAVSRDTTRG) are enriched in polar residues. Phosphoserine is present on residues serine 1339, serine 1352, and serine 1389.

This sequence belongs to the AKNA family. In terms of assembly, interacts with DCTN1. Interacts with MAPRE1/EB1. Interacts with ODF2. Interacts with CAMSAP3. In terms of processing, phosphorylated; phosphorylation regulates dissociation from and reassembly at the centrosome. Expressed in neural stem cells isolated at the peak of subventricular zone (SVZ): localizes at the subdistal appendages of the mother centriole in specific subtypes of neural stem cells and in almost all basal progenitors.

It localises to the cytoplasm. The protein resides in the cytoskeleton. It is found in the microtubule organizing center. Its subcellular location is the centrosome. The protein localises to the centriole. It localises to the nucleus. Functionally, centrosomal protein that plays a key role in cell delamination by regulating microtubule organization. Required for the delamination and retention of neural stem cells from the subventricular zone during neurogenesis. Also regulates the epithelial-to-mesenchymal transition in other epithelial cells. Acts by increasing centrosomal microtubule nucleation and recruiting nucleation factors and minus-end stabilizers, thereby destabilizing microtubules at the adherens junctions and mediating constriction of the apical endfoot. In addition, may also act as a transcription factor that specifically activates the expression of the CD40 receptor and its ligand CD40L/CD154, two cell surface molecules on lymphocytes that are critical for antigen-dependent-B-cell development. Binds to A/T-rich promoters. It is unclear how it can both act as a microtubule organizer and as a transcription factor; additional evidences are required to reconcile these two apparently contradictory functions. In Mus musculus (Mouse), this protein is Microtubule organization protein AKNA.